A 727-amino-acid chain; its full sequence is Translation initiation factor IF-2, mitochondrial (727 aa).

The transit peptide at 1–29 (MNRKILKLENLLRFHTICRQLHSLCQRRM) directs the protein to the mitochondrion. A tr-type G domain is found at 178–348 (PRSPVVTIMG…IALAEMLELK (171 aa)). Residues 187–194 (GHVDHGKT) are G1. 187–194 (GHVDHGKT) contributes to the GTP binding site. A G2 region spans residues 212–216 (GITQH). GTP contacts are provided by residues 234–237 (DTPG) and 288–291 (NKCD). Positions 234–237 (DTPG) are G3. A G4 region spans residues 288–291 (NKCD). The G5 stretch occupies residues 324–326 (SAL). The residue at position 688 (threonine 688) is a Phosphothreonine.

Belongs to the TRAFAC class translation factor GTPase superfamily. Classic translation factor GTPase family. IF-2 subfamily. In terms of assembly, monomer.

The protein resides in the mitochondrion. Its function is as follows. One of the essential components for the initiation of protein synthesis. Protects formylmethionyl-tRNA from spontaneous hydrolysis and promotes its binding to the 30S ribosomal subunits. Also involved in the hydrolysis of GTP during the formation of the 70S ribosomal complex. In Bos taurus (Bovine), this protein is Translation initiation factor IF-2, mitochondrial (MTIF2).